The primary structure comprises 78 residues: Acyl carrier protein (78 aa).

The Carrier domain maps to 2 to 77 (STIEERVKKI…EAIDYINAHA (76 aa)). At S37 the chain carries O-(pantetheine 4'-phosphoryl)serine.

Belongs to the acyl carrier protein (ACP) family. In terms of processing, 4'-phosphopantetheine is transferred from CoA to a specific serine of apo-ACP by AcpS. This modification is essential for activity because fatty acids are bound in thioester linkage to the sulfhydryl of the prosthetic group.

The protein resides in the cytoplasm. It functions in the pathway lipid metabolism; fatty acid biosynthesis. In terms of biological role, carrier of the growing fatty acid chain in fatty acid biosynthesis. This chain is Acyl carrier protein, found in Stutzerimonas stutzeri (strain A1501) (Pseudomonas stutzeri).